Consider the following 64-residue polypeptide: Beta-insect depressant toxin BmKIT4 (64 aa).

The region spanning 1–61 is the LCN-type CS-alpha/beta domain; sequence DGYIRGSNGC…TWKSESNTCG (61 aa). Intrachain disulfides connect Cys-10/Cys-60, Cys-14/Cys-35, Cys-21/Cys-42, and Cys-25/Cys-44. Cys-60 is modified (cysteine amide).

This sequence belongs to the long (4 C-C) scorpion toxin superfamily. Sodium channel inhibitor family. Beta subfamily. In terms of tissue distribution, expressed by the venom gland.

The protein localises to the secreted. Functionally, depressant insect beta-toxins cause a transient contraction paralysis followed by a slow flaccid paralysis. They bind voltage-independently at site-4 of sodium channels (Nav) and shift the voltage of activation toward more negative potentials thereby affecting sodium channel activation and promoting spontaneous and repetitive firing. This toxin is active only on insects. The protein is Beta-insect depressant toxin BmKIT4 of Olivierus martensii (Manchurian scorpion).